Consider the following 249-residue polypeptide: Ribosomal RNA small subunit methyltransferase G (249 aa).

S-adenosyl-L-methionine-binding positions include Gly-88, Phe-93, Asp-111–Thr-113, Ala-139–Glu-140, and Arg-158.

Belongs to the methyltransferase superfamily. RNA methyltransferase RsmG family.

It localises to the cytoplasm. Functionally, specifically methylates the N7 position of a guanine in 16S rRNA. This Thermus thermophilus (strain ATCC BAA-163 / DSM 7039 / HB27) protein is Ribosomal RNA small subunit methyltransferase G.